The following is a 485-amino-acid chain: Alpha-amylase (485 aa).

The first 18 residues, 1 to 18 (MFLTSVLILCSLAALSLG), serve as a signal peptide directing secretion. A Pyrrolidone carboxylic acid modification is found at Q19. A disulfide bond links C46 and C102. Residues N116, R164, and D173 each contribute to the Ca(2+) site. Residues C152 and C166 are joined by a disulfide bond. R201 contributes to the chloride binding site. The active-site Nucleophile is D203. H207 serves as a coordination point for Ca(2+). E240 acts as the Proton donor in catalysis. The chloride site is built by N303 and R339. C439 and C451 are oxidised to a cystine. An N-linked (GlcNAc...) asparagine glycan is attached at N448.

Belongs to the glycosyl hydrolase 13 family. In terms of assembly, monomer. Ca(2+) serves as cofactor. The cofactor is chloride. As to expression, expressed in larval and adult gut.

The protein resides in the secreted. The enzyme catalyses Endohydrolysis of (1-&gt;4)-alpha-D-glucosidic linkages in polysaccharides containing three or more (1-&gt;4)-alpha-linked D-glucose units.. The protein is Alpha-amylase of Phaedon cochleariae (Mustard beetle).